Here is a 367-residue protein sequence, read N- to C-terminus: MTISAQCNLQKLAFATTLAVTIVLSQGRAIGQVKHGSPIELAKADVSTAVRQDMANEVRIVGSLTPIRRSTLTSRVSSTIIELPVQIGDVVNAGDLLVRFERGALESAVTGRKAEADALSAQTELAEAVLERNTRLGERGAASEATRLAALADVLDLRAQLRSKQAEVSDAERSLSHAEVRAEFGGVIAARSVEEGQTVPLNTQLMTIVELNRLEVDAGVPTSRIPLIRLKQSVELTVEGFPGRTFSGEVARISPTADAGSRAVRVFIAVDNEEGLLRGGMFTIGDLRVDDQKDVIALPAASIRHDADGFFVLKVEAGVLQRRPVGLGRSWSDRDLVQVSGVSEGDVIVTAPLPDLVVNTPVIIEGI.

Belongs to the membrane fusion protein (MFP) (TC 8.A.1) family.

Functionally, involved in the production of Medicago-specific nodulation signal molecule. The sequence is that of Nodulation protein NolF (nolF) from Rhizobium meliloti (strain 1021) (Ensifer meliloti).